The sequence spans 418 residues: Nuclear hormone receptor family member nhr-209 (418 aa).

Positions 43-121 form a DNA-binding region, nuclear receptor; that stretch reads PEKCAVCKNA…VGMDSTAIRA (79 aa). 2 consecutive NR C4-type zinc fingers follow at residues 46–66 and 82–104; these read CAVC…CNGC and CMNH…CKGC. Residues 174 to 414 enclose the NR LBD domain; that stretch reads TIPDGFEDMR…SHPPKSLFDE (241 aa). Residues 403-414 form an AF-2 region; that stretch reads ECSHPPKSLFDE.

It belongs to the nuclear hormone receptor family.

It is found in the nucleus. Transcriptional regulator. Plays a role in modulation of lifespan and immunity. This Caenorhabditis elegans protein is Nuclear hormone receptor family member nhr-209.